The sequence spans 488 residues: PTS system mannitol-specific EIICB component (488 aa).

The Cytoplasmic segment spans residues 1 to 26; it reads MRKKLAKVKVHIQSLDSLLSSMTMPI. Residues 15–362 form the PTS EIIC type-2 domain; the sequence is LDSLLSSMTM…LSLTRKKQLK (348 aa). The chain crosses the membrane as a helical span at residues 27-48; it reads IGIFIAWGLLASFFIPSGWTPD. Topologically, residues 49–52 are extracellular; sequence KNLA. A helical transmembrane segment spans residues 53 to 73; it reads LMVGIGIQYVIPTIIXFFGGK. Residues 74–147 lie on the Cytoplasmic side of the membrane; it reads KIYEIRGGVI…SGFEMLVNNF (74 aa). The helical transmembrane segment at 148–169 threads the bilayer; the sequence is YLGFLGFALIFPSFYLSIYLIG. Residues 170-178 are Extracellular-facing; the sequence is YIQLGLKLL. The helical transmembrane segment at 179-199 threads the bilayer; that stretch reads VEIMQQYKLYPIAAIVIEPAK. Over 200–289 the chain is Cytoplasmic; sequence VLFLNNAINH…VLLKPVLILA (90 aa). The helical transmembrane segment at 290–309 threads the bilayer; it reads TIAVGVVGNGILQIFNAGTI. At 310–331 the chain is on the extracellular side; sequence APVSPGSVIAGFLQINKTPLDV. Residues 332–353 traverse the membrane as a helical segment; the sequence is AGYALALVLSAVTSLLISLLLL. Residues 354–488 lie on the Cytoplasmic side of the membrane; the sequence is SLTRKKQLKT…IIEKIKNEKN (135 aa). The PTS EIIB type-2 domain maps to 397–488; the sequence is SQVTFVCDAG…IIEKIKNEKN (92 aa). C403 acts as the Phosphocysteine intermediate; for EIIB activity in catalysis. Residue C403 is modified to Phosphocysteine; by EIIA.

As to quaternary structure, homodimer.

Its subcellular location is the cell membrane. The catalysed reaction is D-mannitol(out) + N(pros)-phospho-L-histidyl-[protein] = D-mannitol 1-phosphate(in) + L-histidyl-[protein]. Functionally, the phosphoenolpyruvate-dependent sugar phosphotransferase system (sugar PTS), a major carbohydrate active transport system, catalyzes the phosphorylation of incoming sugar substrates concomitantly with their translocation across the cell membrane. The enzyme II CmtAB PTS system is involved in D-mannitol transport. This chain is PTS system mannitol-specific EIICB component (mtlA), found in Mycoplasma pneumoniae (strain ATCC 29342 / M129 / Subtype 1) (Mycoplasmoides pneumoniae).